The following is a 370-amino-acid chain: D-alanine--D-alanine ligase (370 aa).

Residues 142–348 form the ATP-grasp domain; sequence KQILTHHHIQ…YTALIDQLIQ (207 aa). An ATP-binding site is contributed by 172–227; it reads QAHVGDHLFIKPANQGSSIGIHKAENEQEYLDGLADAFKYDYKILVEESIDNPREV. Mg(2+)-binding residues include Asp-302, Glu-315, and Asn-317.

This sequence belongs to the D-alanine--D-alanine ligase family. It depends on Mg(2+) as a cofactor. Requires Mn(2+) as cofactor.

The protein localises to the cytoplasm. It catalyses the reaction 2 D-alanine + ATP = D-alanyl-D-alanine + ADP + phosphate + H(+). It functions in the pathway cell wall biogenesis; peptidoglycan biosynthesis. Cell wall formation. This is D-alanine--D-alanine ligase from Lactiplantibacillus plantarum (strain ATCC BAA-793 / NCIMB 8826 / WCFS1) (Lactobacillus plantarum).